A 205-amino-acid polypeptide reads, in one-letter code: Thymidylate kinase (205 aa).

9–16 (GPEGSGKT) serves as a coordination point for ATP.

It belongs to the thymidylate kinase family.

It catalyses the reaction dTMP + ATP = dTDP + ADP. In terms of biological role, phosphorylation of dTMP to form dTDP in both de novo and salvage pathways of dTTP synthesis. The polypeptide is Thymidylate kinase (Staphylococcus aureus (strain MSSA476)).